Consider the following 351-residue polypeptide: Biotin synthase (351 aa).

The Radical SAM core domain maps to 48–265 (NKVRIHILDN…LCMFRLINPD (218 aa)). Residues cysteine 63, cysteine 67, and cysteine 70 each coordinate [4Fe-4S] cluster. The [2Fe-2S] cluster site is built by cysteine 107, cysteine 139, cysteine 199, and arginine 269.

This sequence belongs to the radical SAM superfamily. Biotin synthase family. As to quaternary structure, homodimer. It depends on [4Fe-4S] cluster as a cofactor. [2Fe-2S] cluster serves as cofactor.

It carries out the reaction (4R,5S)-dethiobiotin + (sulfur carrier)-SH + 2 reduced [2Fe-2S]-[ferredoxin] + 2 S-adenosyl-L-methionine = (sulfur carrier)-H + biotin + 2 5'-deoxyadenosine + 2 L-methionine + 2 oxidized [2Fe-2S]-[ferredoxin]. It functions in the pathway cofactor biosynthesis; biotin biosynthesis; biotin from 7,8-diaminononanoate: step 2/2. In terms of biological role, catalyzes the conversion of dethiobiotin (DTB) to biotin by the insertion of a sulfur atom into dethiobiotin via a radical-based mechanism. The sequence is that of Biotin synthase from Leptospira interrogans serogroup Icterohaemorrhagiae serovar Lai (strain 56601).